The chain runs to 142 residues: ATP synthase epsilon chain (142 aa).

The protein belongs to the ATPase epsilon chain family. As to quaternary structure, F-type ATPases have 2 components, CF(1) - the catalytic core - and CF(0) - the membrane proton channel. CF(1) has five subunits: alpha(3), beta(3), gamma(1), delta(1), epsilon(1). CF(0) has three main subunits: a, b and c.

Its subcellular location is the cell inner membrane. In terms of biological role, produces ATP from ADP in the presence of a proton gradient across the membrane. The polypeptide is ATP synthase epsilon chain (Shewanella baltica (strain OS155 / ATCC BAA-1091)).